A 143-amino-acid polypeptide reads, in one-letter code: Endoribonuclease YbeY (143 aa).

Zn(2+) contacts are provided by histidine 111, histidine 115, and aspartate 121.

The protein belongs to the endoribonuclease YbeY family. Zn(2+) serves as cofactor.

The protein resides in the cytoplasm. Functionally, single strand-specific metallo-endoribonuclease involved in late-stage 70S ribosome quality control and in maturation of the 3' terminus of the 16S rRNA. The protein is Endoribonuclease YbeY of Cytophaga hutchinsonii (strain ATCC 33406 / DSM 1761 / CIP 103989 / NBRC 15051 / NCIMB 9469 / D465).